A 487-amino-acid chain; its full sequence is V-type proton ATPase subunit B3 (487 aa).

The protein belongs to the ATPase alpha/beta chains family. In terms of assembly, V-ATPase is a heteromultimeric enzyme composed of a peripheral catalytic V1 complex (components A to H) attached to an integral membrane V0 proton pore complex (components: a, c, c'', d and e).

Its subcellular location is the vacuole membrane. Non-catalytic subunit of the peripheral V1 complex of vacuolar ATPase. V-ATPase is responsible for acidifying a variety of intracellular compartments in eukaryotic cells. The polypeptide is V-type proton ATPase subunit B3 (VHA-B3) (Arabidopsis thaliana (Mouse-ear cress)).